A 242-amino-acid chain; its full sequence is uncharacterized protein (242 aa).

This is an uncharacterized protein from Haemophilus influenzae (strain ATCC 51907 / DSM 11121 / KW20 / Rd).